A 224-amino-acid chain; its full sequence is Putative ankyrin repeat protein R845 (224 aa).

ANK repeat units lie at residues 1–14 (MVEY…DVRS), 15–44 (NYDH…DVSM), 46–74 (YDYI…DPRT), 75–104 (NNDK…DIRI), 105–134 (DNDS…DIRA), 136–164 (NDYS…DVRA), 165–194 (DNDY…DFRA), and 196–224 (NDCA…VCPY).

In Acanthamoeba polyphaga mimivirus (APMV), this protein is Putative ankyrin repeat protein R845.